The chain runs to 323 residues: MDSKHQCVKLNDGHFMPVLGFGTYAPAEVPKNKAIEATKLAIEAGFRHIDSAHLYNNEEYVGLAIRSKIADGTVKREDIFYTSKLWCNSHRPEFVRPALERSLKNLQLDYVDLYLIHFPVSLKPGEELIPKDENGKLLFDTVDLCATWEAMEKCKDAGLAKSIGVSNFNRRQLEMILNKPGLKYKPVCNQVECHPYLNQRKLLDFCKSKDIVLVAYSALGSHREKPWVDQNSPVLLEDPVLCALAKKHKRTPALIALRYQLQRGVVVLAKSYNEQRIRENMKVFEFQLTSEDMKAIDGLDRNIRYLTLDIFAGPPNYPFSDEY.

Residues 20 to 24 and Asp-50 each bind NADP(+); that span reads GFGTY. Tyr-24 is a substrate binding site. Tyr-55 functions as the Proton donor in the catalytic mechanism. His-117 provides a ligand contact to substrate. Residues 166–167, Gln-190, and 216–222 contribute to the NADP(+) site; these read SN and YSALGSH. Residues His-222 and Trp-227 each coordinate substrate. 270–280 is a binding site for NADP(+); it reads KSYNEQRIREN.

The protein belongs to the aldo/keto reductase family. As to quaternary structure, monomer. In terms of tissue distribution, expressed in liver, adrenal gland, intestine and kidney.

It is found in the cytoplasm. The protein resides in the cytosol. It carries out the reaction a 3alpha-hydroxysteroid + NADP(+) = a 3-oxosteroid + NADPH + H(+). The enzyme catalyses a 3alpha-hydroxysteroid + NAD(+) = a 3-oxosteroid + NADH + H(+). The catalysed reaction is (17R,20S)-17,20-dihydroxypregn-4-en-3-one + NADP(+) = 17alpha-hydroxyprogesterone + NADPH + H(+). It catalyses the reaction (17R,20S)-17,20-dihydroxypregn-4-en-3-one + NAD(+) = 17alpha-hydroxyprogesterone + NADH + H(+). It carries out the reaction (20S)-hydroxypregn-4-en-3-one + NADP(+) = progesterone + NADPH + H(+). The enzyme catalyses (20S)-hydroxypregn-4-en-3-one + NAD(+) = progesterone + NADH + H(+). The catalysed reaction is (1R,2R)-1,2-dihydrobenzene-1,2-diol + NADP(+) = catechol + NADPH + H(+). It catalyses the reaction (S)-indan-1-ol + NAD(+) = indan-1-one + NADH + H(+). It carries out the reaction (S)-indan-1-ol + NADP(+) = indan-1-one + NADPH + H(+). The enzyme catalyses 5alpha-androstane-3alpha,17beta-diol + NADP(+) = 17beta-hydroxy-5alpha-androstan-3-one + NADPH + H(+). The catalysed reaction is 5alpha-androstane-3beta,17beta-diol + NADP(+) = 17beta-hydroxy-5alpha-androstan-3-one + NADPH + H(+). It catalyses the reaction 5alpha-androstane-3alpha,17beta-diol + NAD(+) = 17beta-hydroxy-5alpha-androstan-3-one + NADH + H(+). It carries out the reaction 17beta-hydroxy-5alpha-androstan-3-one + NADP(+) = 5alpha-androstan-3,17-dione + NADPH + H(+). The enzyme catalyses androsterone + NADP(+) = 5alpha-androstan-3,17-dione + NADPH + H(+). The catalysed reaction is androsterone + NADPH + H(+) = 5alpha-androstane-3alpha,17beta-diol + NADP(+). It catalyses the reaction 5alpha-androstane-3alpha,17beta-diol + NAD(+) = androsterone + NADH + H(+). It carries out the reaction 17beta-estradiol + NADP(+) = estrone + NADPH + H(+). The enzyme catalyses 17beta-estradiol + NAD(+) = estrone + NADH + H(+). The catalysed reaction is testosterone + NADP(+) = androst-4-ene-3,17-dione + NADPH + H(+). It catalyses the reaction 20alpha-hydroxy-5beta-pregnan-3-one + NADP(+) = 5beta-pregnan-3,20-dione + NADPH + H(+). It carries out the reaction 3beta-hydroxy-5beta-pregnane-20-one + NADP(+) = 5beta-pregnan-3,20-dione + NADPH + H(+). The enzyme catalyses 3beta-hydroxy-5beta-pregnane-20-one + NADPH + H(+) = 3beta,20alpha-dihydroxy-5beta-pregnane + NADP(+). The catalysed reaction is (3beta,5alpha,17beta)-3-hydroxyandrostan-17-yl sulfate + NADP(+) = 5alpha-dihydrotestosterone sulfate + NADPH + H(+). Its pathway is steroid metabolism. Functionally, cytosolic aldo-keto reductase that catalyzes the NADH and NADPH-dependent reduction of ketosteroids to hydroxysteroids. Most probably acts as a reductase in vivo since the oxidase activity measured in vitro is inhibited by physiological concentrations of NADPH. Displays a broad positional specificity acting on positions 3, 17 and 20 of steroids and regulates the metabolism of hormones like estrogens and androgens. May also reduce conjugated steroids such as 5alpha-dihydrotestosterone sulfate. Displays affinity for bile acids. The polypeptide is Aldo-keto reductase family 1 member C1 (AKR1C1) (Macaca fuscata fuscata (Japanese macaque)).